The chain runs to 105 residues: Nucleoid-associated protein SaurJH1_0513 (105 aa).

The tract at residues 1 to 33 (MRGGGNMQQMMKQMQKMQKKMAQEQKKLKEERI) is disordered. The span at 7–16 (MQQMMKQMQK) shows a compositional bias: low complexity. Residues 21-33 (MAQEQKKLKEERI) are compositionally biased toward basic and acidic residues.

This sequence belongs to the YbaB/EbfC family. As to quaternary structure, homodimer.

The protein resides in the cytoplasm. Its subcellular location is the nucleoid. Its function is as follows. Binds to DNA and alters its conformation. May be involved in regulation of gene expression, nucleoid organization and DNA protection. The protein is Nucleoid-associated protein SaurJH1_0513 of Staphylococcus aureus (strain JH1).